The primary structure comprises 237 residues: UPF0053 inner membrane protein YgdQ (237 aa).

The Periplasmic segment spans residues M1–T17. The chain crosses the membrane as a helical span at residues L18–A38. The Cytoplasmic segment spans residues K39–R50. The chain crosses the membrane as a helical span at residues L51–T71. Residues R72–T79 are Periplasmic-facing. A helical membrane pass occupies residues I80–I100. Residues W101 to S124 are Cytoplasmic-facing. A helical transmembrane segment spans residues F125–I145. Residues T146–S151 lie on the Periplasmic side of the membrane. The helical transmembrane segment at D152–A172 threads the bilayer. The Cytoplasmic segment spans residues R173–K186. A helical membrane pass occupies residues M187–I207. Residues H208–V209 lie on the Periplasmic side of the membrane. A helical transmembrane segment spans residues P210–I230. The Cytoplasmic segment spans residues R231–L237.

This sequence belongs to the UPF0053 family.

It localises to the cell inner membrane. The chain is UPF0053 inner membrane protein YgdQ (ygdQ) from Escherichia coli O157:H7.